We begin with the raw amino-acid sequence, 260 residues long: Putative protein phosphatase 2C-like protein 44 (260 aa).

One can recognise a PPM-type phosphatase domain in the interval 41–259 (YYTVDRLSYA…SSISCVVIRF (219 aa)).

The protein belongs to the PP2C family.

This is Putative protein phosphatase 2C-like protein 44 from Arabidopsis thaliana (Mouse-ear cress).